We begin with the raw amino-acid sequence, 1091 residues long: E3 ubiquitin-protein ligase TRIM33 (1091 aa).

Over residues 1–13 the composition is skewed to gly residues; it reads MADNKGGGGGGGE. The segment at 1 to 87 is disordered; sequence MADNKGGGGG…SATPASSSSS (87 aa). A compositionally biased stretch (low complexity) spans 52–87; it reads APVAAVPTDTPAEENPAPSSSSVASSSATPASSSSS. The RING-type 1 zinc-finger motif lies at 97 to 154; it reads CAVCKLSLQSRDTEPKLLPCLHSFCRRCLPEPERQLSVPGGTNGDIQQVGVIRCLVCR. The B box-type 1; atypical zinc-finger motif lies at 180-227; the sequence is KSEQVCTSCEDNASAVGFCVECGEWLCKTCIEAHQRVKFTKDHIITNK. Positions 185, 188, 209, 213, 245, 248, 268, and 273 each coordinate Zn(2+). A B box-type 2 zinc finger spans residues 240–281; it reads QRPVFCPVHKQEQLKLFCETCDRLTCRDCQLLEHKEHRYQFL. A coiled-coil region spans residues 269-361; the sequence is QLLEHKEHRY…QLESVTKERQ (93 aa). Disordered stretches follow at residues 672–779 and 821–844; these read LPQP…TPPL and GKSA…GSNK. The span at 675–721 shows a compositional bias: low complexity; it reads PTSNMNPSPAPSAMSPGSTGLSNSHTPVRPPSTSSTGSRGSCGSSSR. Over residues 754–763 the composition is skewed to basic and acidic residues; that stretch reads KQEKAEDGRR. The span at 768–779 shows a compositional bias: low complexity; that stretch reads LSSPESSLTPPL. A PHD-type zinc finger spans residues 850–897; that stretch reads EDWCAVCQNGGDLLCCEKCPKVFHLTCHVPTLLSFPSGEWICTFCRDL. The region spanning 920–1043 is the Bromo domain; it reads GLSPVDQMKC…LYFEEKLPAI (124 aa). The disordered stretch occupies residues 1051 to 1091; it reads PLPEFEAEDDDGDVTDDSDDDDFVQPRRKRLKSEERPVHIK. Residues 1055–1073 are compositionally biased toward acidic residues; that stretch reads FEAEDDDGDVTDDSDDDDF. The segment covering 1082–1091 has biased composition (basic and acidic residues); that stretch reads KSEERPVHIK.

As to quaternary structure, may interact with smad4.

The protein localises to the nucleus. It carries out the reaction S-ubiquitinyl-[E2 ubiquitin-conjugating enzyme]-L-cysteine + [acceptor protein]-L-lysine = [E2 ubiquitin-conjugating enzyme]-L-cysteine + N(6)-ubiquitinyl-[acceptor protein]-L-lysine.. Its pathway is protein modification; protein ubiquitination. Acts as an E3 ubiquitin-protein ligase for smad4. Promotes ectoderm embryonic development at the expense of other germ layers. Inhibits mesodermal differentiation. Promotes neural development of the ectoderm. Promotes smad4 alpha degradation via the ubiquitin proteasome pathway. May act as a transcriptional repressor. This chain is E3 ubiquitin-protein ligase TRIM33 (trim33), found in Xenopus laevis (African clawed frog).